A 461-amino-acid polypeptide reads, in one-letter code: Ig heavy chain C region, membrane-bound form (461 aa).

Positions 1 to 99 (ATPSPPTLYG…GESVWIKEIP (99 aa)) are CH1. Residues 100-205 (DCKGDKVHPT…TQSRNITGSQ (106 aa)) are CH2. 8 N-linked (GlcNAc...) asparagine glycosylation sites follow: Asn164, Asn200, Asn245, Asn275, Asn374, Asn411, Asn415, and Asn437. Residues 206–308 (VPCSCNDPVI…PLRASIHKEE (103 aa)) form a CH3 region. The interval 309–418 (VKDLREPSVS…IINRTVNKSS (110 aa)) is CH4. The helical transmembrane segment at 438–458 (ASTFIILFFLSIFYRAAVTLV) threads the bilayer.

The protein resides in the cell membrane. This is Ig heavy chain C region, membrane-bound form from Heterodontus francisci (Horn shark).